A 216-amino-acid chain; its full sequence is MALSEAAVKVQAALQERGLETPMLPNVFTPEERKDKIEFHMKEILTLMSLDLSDDSLADTPRRIAKMYVDEIFSGLDYENFPKITVIDNKMGFDEMVRVQDISLTSTCEHHLVTIDGTATIAYIPRKKIIGLSKINRIVRFFSQRPQVQERLTQQVLVALQTLLETKDVAVKMDAVHYCVKSRGVMDSTSSTTTTALGGIFKSNPATRAEFLNQSK.

C108, H111, and C179 together coordinate Zn(2+).

This sequence belongs to the GTP cyclohydrolase I family. As to quaternary structure, toroid-shaped homodecamer, composed of two pentamers of five dimers.

The enzyme catalyses GTP + H2O = 7,8-dihydroneopterin 3'-triphosphate + formate + H(+). It participates in cofactor biosynthesis; 7,8-dihydroneopterin triphosphate biosynthesis; 7,8-dihydroneopterin triphosphate from GTP: step 1/1. In Shewanella sp. (strain ANA-3), this protein is GTP cyclohydrolase 1.